A 169-amino-acid chain; its full sequence is Oleosin Ara h 10.0101 (169 aa).

2 helical membrane passes run 39–59 (VIAV…AGLA) and 73–93 (LFIL…LSVA). The segment covering 146 to 156 (KDVGQKTKEVG) has biased composition (basic and acidic residues). Residues 146 to 169 (KDVGQKTKEVGQEIQTKAQDSKRT) form a disordered region.

It belongs to the oleosin family. In terms of tissue distribution, expressed in seeds (at protein level).

It is found in the lipid droplet. The protein localises to the membrane. May have a structural role to stabilize the lipid body during desiccation of the seed by preventing coalescence of the oil. Probably interacts with both lipid and phospholipid moieties of lipid bodies. May also provide recognition signals for specific lipase anchorage in lipolysis during seedling growth. The chain is Oleosin Ara h 10.0101 from Arachis hypogaea (Peanut).